We begin with the raw amino-acid sequence, 285 residues long: Probable endonuclease 4 (285 aa).

Residues histidine 69, histidine 109, glutamate 145, aspartate 179, histidine 182, histidine 216, aspartate 229, histidine 231, and glutamate 261 each contribute to the Zn(2+) site.

This sequence belongs to the AP endonuclease 2 family. Requires Zn(2+) as cofactor.

It carries out the reaction Endonucleolytic cleavage to 5'-phosphooligonucleotide end-products.. Endonuclease IV plays a role in DNA repair. It cleaves phosphodiester bonds at apurinic or apyrimidinic (AP) sites, generating a 3'-hydroxyl group and a 5'-terminal sugar phosphate. This Salmonella dublin (strain CT_02021853) protein is Probable endonuclease 4.